Consider the following 1200-residue polypeptide: Zinc finger protein 804A (1200 aa).

A C2H2-type zinc finger spans residues 57-81 (FYCELCDKQYYKHQEFDNHINSYDH). 6 disordered regions span residues 252–280 (STSHLQLPPPTCELLSSEEKGNSPPPEAM), 343–367 (DGPVSKSNPNIIEKNPTVPNDRTSA), 582–687 (HWFH…NCGG), 727–777 (EDDG…SDES), 799–828 (QPKKKRRRKRSRLHIGDGTTKMKGNSNYPM), and 874–949 (PYNP…TNPE). Positions 585-603 (HKSRRKKKRRKLCRYHPGK) are enriched in basic residues. Positions 604 to 666 (SSKEPEGSGK…ASTHLGEKET (63 aa)) are enriched in basic and acidic residues. Polar residues-rich tracts occupy residues 667 to 687 (MNTTVNTESNDAAPGSQNCGG) and 732 to 756 (LASQSNVKGPTQNQPVKRGYSSLTN). Residues 800–811 (PKKKRRRKRSRL) are compositionally biased toward basic residues. Residues 891-944 (TETTPCDSSQTSNDLATPVNVTRDPSNSTTDNTLLEHNQRSQTTNSNEKQTPFK) are compositionally biased toward polar residues.

The protein is Zinc finger protein 804A (Znf804a) of Mus musculus (Mouse).